A 535-amino-acid polypeptide reads, in one-letter code: NEDD8-activating enzyme E1 regulatory subunit (535 aa).

Residues 332–345 form an interaction with UBA3 region; sequence DMIADSSKFIKLQN.

This sequence belongs to the ubiquitin-activating E1 family. ULA1 subfamily. In terms of assembly, heterodimer of UBA3 and NAE1. The complex binds NEDD8 and UBE2M.

The protein operates within protein modification; protein neddylation. Regulatory subunit of the dimeric UBA3-NAE1 E1 enzyme. E1 activates NEDD8 by first adenylating its C-terminal glycine residue with ATP, thereafter linking this residue to the side chain of the catalytic cysteine, yielding a NEDD8-UBA3 thioester and free AMP. E1 finally transfers NEDD8 to the catalytic cysteine of UBE2M. The covalent attachment of NEDD8 to target proteins is known as 'neddylation' and the process is involved in the regulation of cell growth, viability and development. The protein is NEDD8-activating enzyme E1 regulatory subunit (NAE1) of Gallus gallus (Chicken).